The chain runs to 186 residues: UPF0301 protein Neut_0448 (186 aa).

The protein belongs to the UPF0301 (AlgH) family.

The chain is UPF0301 protein Neut_0448 from Nitrosomonas eutropha (strain DSM 101675 / C91 / Nm57).